The sequence spans 98 residues: NADH-ubiquinone oxidoreductase chain 4L (98 aa).

Helical transmembrane passes span 1–21, 29–49, and 61–81; these read MSMVYMNIMMAFTVSLVGLLM, SLLCLEGMMLSLFVMAALTIL, and IILLVFAACEAALGLSLLVMV.

Belongs to the complex I subunit 4L family. As to quaternary structure, core subunit of respiratory chain NADH dehydrogenase (Complex I) which is composed of 45 different subunits.

The protein resides in the mitochondrion inner membrane. The catalysed reaction is a ubiquinone + NADH + 5 H(+)(in) = a ubiquinol + NAD(+) + 4 H(+)(out). Functionally, core subunit of the mitochondrial membrane respiratory chain NADH dehydrogenase (Complex I) which catalyzes electron transfer from NADH through the respiratory chain, using ubiquinone as an electron acceptor. Part of the enzyme membrane arm which is embedded in the lipid bilayer and involved in proton translocation. In Bos indicus (Zebu), this protein is NADH-ubiquinone oxidoreductase chain 4L (MT-ND4L).